The following is a 219-amino-acid chain: LHFPL tetraspan subfamily member 5 protein (219 aa).

At 1 to 24 (MVKLLPAQEAAKIYHTNYVRNSRA) the chain is on the cytoplasmic side. A helical transmembrane segment spans residues 25-45 (VGVMWGTLTICFSVLVMALFI). The Extracellular segment spans residues 46–98 (QPYWIGDSVSTPQAGYFGLFSYCVGNVLSSELICKGGPLDFSSIPSRAFKTAM). Residues 99–119 (FFVALAMFLIIGSIICFSLFF) form a helical membrane-spanning segment. The Cytoplasmic portion of the chain corresponds to 120–128 (VCNTATVYK). A helical transmembrane segment spans residues 129–149 (ICAWMQLAAATGLMIGCLVYP). Residues 150-178 (DGWDSSEVRRMCGEQTGKYTLGHCTIRWA) are Extracellular-facing. A helical membrane pass occupies residues 179–199 (FMLAILSIGDALILSFLAFVL). The Cytoplasmic portion of the chain corresponds to 200-219 (GYRQDKLLPDDYKADGNEEV).

This sequence belongs to the LHFP family. Forms the MET channel composed of TMC (TMC1 or TMC2), TMIE, TOMT, CIB (CIB2 or CIB3), LHPL5 and PCDH15. Interaction with PCDH15 is required for efficient localization to hair bundles.

It localises to the cell membrane. Functionally, auxiliary subunit of the mechanotransducer (MET) non-specific cation channel complex located at the tips of the shorter stereocilia of cochlear hair cells and that mediates sensory transduction in the auditory system. The MET complex is composed of two dimeric pore-forming ion-conducting transmembrane TMC (TMC1 or TMC2) subunits, and aided by several auxiliary proteins including LHFPL5, TMIE, CIB2/3 and TOMT, and the tip-link PCDH15. Functionally couples PCDH15 to the transduction channel. The chain is LHFPL tetraspan subfamily member 5 protein from Rattus norvegicus (Rat).